The following is a 48-amino-acid chain: Sperm protamine P1 (48 aa).

Belongs to the protamine P1 family. In terms of assembly, cross-linked by interchain disulfide bonds around the DNA-helix. As to expression, testis.

It is found in the nucleus. It localises to the chromosome. Its function is as follows. Protamines substitute for histones in the chromatin of sperm during the haploid phase of spermatogenesis. They compact sperm DNA into a highly condensed, stable and inactive complex. The sequence is that of Sperm protamine P1 (PRM1) from Cavia porcellus (Guinea pig).